The sequence spans 393 residues: Seven-bladed beta-propeller protein Rv1057 (393 aa).

The tract at residues 208 to 230 (DGGRIGSRSRSRQKSSKPRGNQA) is disordered. A compositionally biased stretch (basic residues) spans 214-224 (SRSRSRQKSSK).

In terms of biological role, may play an important role in host-pathogen interactions and in ESAT-6 secretion. The polypeptide is Seven-bladed beta-propeller protein Rv1057 (Mycobacterium tuberculosis (strain ATCC 25618 / H37Rv)).